The primary structure comprises 191 residues: Orotate phosphoribosyltransferase (191 aa).

114–122 (EDVVTTGKS) serves as a coordination point for 5-phospho-alpha-D-ribose 1-diphosphate. Positions 118 and 146 each coordinate orotate.

Belongs to the purine/pyrimidine phosphoribosyltransferase family. PyrE subfamily. As to quaternary structure, homodimer. The cofactor is Mg(2+).

It carries out the reaction orotidine 5'-phosphate + diphosphate = orotate + 5-phospho-alpha-D-ribose 1-diphosphate. It participates in pyrimidine metabolism; UMP biosynthesis via de novo pathway; UMP from orotate: step 1/2. Its function is as follows. Catalyzes the transfer of a ribosyl phosphate group from 5-phosphoribose 1-diphosphate to orotate, leading to the formation of orotidine monophosphate (OMP). This Clostridium botulinum (strain Kyoto / Type A2) protein is Orotate phosphoribosyltransferase.